A 267-amino-acid chain; its full sequence is Phosphate import ATP-binding protein PstB 2 (267 aa).

The 242-residue stretch at 21-262 (LSTKDLHVYY…AKLQSTSDYV (242 aa)) folds into the ABC transporter domain. An ATP-binding site is contributed by 53 to 60 (GPSGCGKS).

This sequence belongs to the ABC transporter superfamily. Phosphate importer (TC 3.A.1.7) family. The complex is composed of two ATP-binding proteins (PstB), two transmembrane proteins (PstC and PstA) and a solute-binding protein (PstS).

It is found in the cell membrane. The enzyme catalyses phosphate(out) + ATP + H2O = ADP + 2 phosphate(in) + H(+). In terms of biological role, part of the ABC transporter complex PstSACB involved in phosphate import. Responsible for energy coupling to the transport system. The sequence is that of Phosphate import ATP-binding protein PstB 2 from Streptococcus mutans serotype c (strain ATCC 700610 / UA159).